The primary structure comprises 443 residues: Structure-specific endonuclease subunit SLX1 (443 aa).

The 81-residue stretch at 13 to 93 (RVYVCYCLRS…QKPHASRHLR (81 aa)) folds into the GIY-YIG domain. Residues 121–140 (FPATRSSAPSSAASHDSGLN) form a disordered region. The segment at 361–419 (CGLCGGHINRHVPLSYTHCPHACDAVFHLTCLARYSLEQETRAHARTFCLPTSAWCPMC) adopts an SLX1-type zinc-finger fold.

The protein belongs to the SLX1 family. Forms a heterodimer with SLX4. It depends on a divalent metal cation as a cofactor.

The protein resides in the nucleus. Functionally, catalytic subunit of the SLX1-SLX4 structure-specific endonuclease that resolves DNA secondary structures generated during DNA repair and recombination. Has endonuclease activity towards branched DNA substrates, introducing single-strand cuts in duplex DNA close to junctions with ss-DNA. The sequence is that of Structure-specific endonuclease subunit SLX1 from Malassezia globosa (strain ATCC MYA-4612 / CBS 7966) (Dandruff-associated fungus).